We begin with the raw amino-acid sequence, 533 residues long: Apolipoprotein N-acyltransferase (533 aa).

Transmembrane regions (helical) follow at residues 17 to 37 (FFLPLLSGLLLGISFPTWPAV), 72 to 92 (LLFCLIALWWVCLATFVGGIL), 116 to 136 (GFRSALLALPFIWTGWEWAYM), 165 to 185 (GVWGVSFWLLTFNVLVLLLFM), and 190 to 210 (FQVKVGIVMVMLVMIATPLLY). A CN hydrolase domain is found at 232-499 (VQPDIDPHEK…QSVLTADVPL (268 aa)). Catalysis depends on E274, which acts as the Proton acceptor. K352 is a catalytic residue. C410 (nucleophile) is an active-site residue. The helical transmembrane segment at 510-530 (PDLVPHVCLGIAGVLALVAAV) threads the bilayer.

It belongs to the CN hydrolase family. Apolipoprotein N-acyltransferase subfamily.

The protein resides in the cell inner membrane. The catalysed reaction is N-terminal S-1,2-diacyl-sn-glyceryl-L-cysteinyl-[lipoprotein] + a glycerophospholipid = N-acyl-S-1,2-diacyl-sn-glyceryl-L-cysteinyl-[lipoprotein] + a 2-acyl-sn-glycero-3-phospholipid + H(+). It participates in protein modification; lipoprotein biosynthesis (N-acyl transfer). Functionally, catalyzes the phospholipid dependent N-acylation of the N-terminal cysteine of apolipoprotein, the last step in lipoprotein maturation. The polypeptide is Apolipoprotein N-acyltransferase (Chlorobaculum tepidum (strain ATCC 49652 / DSM 12025 / NBRC 103806 / TLS) (Chlorobium tepidum)).